The following is a 61-amino-acid chain: Odorranain-A6 (61 aa).

The signal sequence occupies residues 1-22 (MFSMKKSLLLLFFLGTISLSLC). The propeptide occupies 23–45 (EQERDAEEEEGSENGAEDIKINR).

The protein belongs to the frog skin active peptide (FSAP) family. Brevinin subfamily. As to expression, expressed by the skin glands.

The protein resides in the secreted. The chain is Odorranain-A6 from Odorrana hainanensis (Odor frog).